The primary structure comprises 244 residues: 1-(5-phosphoribosyl)-5-[(5-phosphoribosylamino)methylideneamino] imidazole-4-carboxamide isomerase (244 aa).

Catalysis depends on Asp-10, which acts as the Proton acceptor. The Proton donor role is filled by Asp-132.

This sequence belongs to the HisA/HisF family.

Its subcellular location is the cytoplasm. The catalysed reaction is 1-(5-phospho-beta-D-ribosyl)-5-[(5-phospho-beta-D-ribosylamino)methylideneamino]imidazole-4-carboxamide = 5-[(5-phospho-1-deoxy-D-ribulos-1-ylimino)methylamino]-1-(5-phospho-beta-D-ribosyl)imidazole-4-carboxamide. The protein operates within amino-acid biosynthesis; L-histidine biosynthesis; L-histidine from 5-phospho-alpha-D-ribose 1-diphosphate: step 4/9. The sequence is that of 1-(5-phosphoribosyl)-5-[(5-phosphoribosylamino)methylideneamino] imidazole-4-carboxamide isomerase from Stenotrophomonas maltophilia (strain R551-3).